Reading from the N-terminus, the 224-residue chain is MSVFGKLFGGGGKGGKGPTPQEAIQKLRETEEMLAKKQDFLEKKIDAELLIAKKNGTKNKRAALQALKRKKRYEKQLAQIDGTLSTIEFQREALENANTNTEVLKNMGFAAKAMKTAHENMDIDKVDDLMQDITEQQELAQEISDAISRPVGFGEEFDEDELMAELEELEQEELDKDLLQISGPEDVPLPNVPSNPLPKKTAVAQKKRQEEDEDDMEELKAWAM.

2 disordered regions span residues 1 to 21 and 182 to 224; these read MSVF…PTPQ and SGPE…AWAM. Gly residues predominate over residues 7–17; the sequence is LFGGGGKGGKG. A coiled-coil region spans residues 21-221; sequence QEAIQKLRET…DEDDMEELKA (201 aa).

It belongs to the SNF7 family. In terms of assembly, probable core component of the endosomal sorting required for transport complex III (ESCRT-III). ESCRT-III components are thought to multimerize to form a flat lattice on the perimeter membrane of the endosome.

The protein localises to the cytoplasm. It is found in the cytosol. The protein resides in the late endosome membrane. Probable core component of the endosomal sorting required for transport complex III (ESCRT-III) which is involved in multivesicular bodies (MVBs) formation and sorting of endosomal cargo proteins into MVBs. MVBs contain intraluminal vesicles (ILVs) that are generated by invagination and scission from the limiting membrane of the endosome and mostly are delivered to lysosomes enabling degradation of membrane proteins, such as stimulated growth factor receptors, lysosomal enzymes and lipids. Key component of the cytokinesis checkpoint, a process required to delay abscission to prevent both premature resolution of intercellular chromosome bridges and accumulation of DNA damage. The protein is Charged multivesicular body protein 4c (chmp4c) of Danio rerio (Zebrafish).